We begin with the raw amino-acid sequence, 201 residues long: dCTP deaminase, dUMP-forming (201 aa).

DCTP is bound by residues 101–106, Asp-119, 127–129, Gln-148, Tyr-162, and Gln-174; these read KSSLGR and TLE. Catalysis depends on Glu-129, which acts as the Proton donor/acceptor. Positions 166–183 are enriched in polar residues; that stretch reads EYSSRYQGQRGPTASRSF. The segment at 166–201 is disordered; the sequence is EYSSRYQGQRGPTASRSFLNFHRTDVSGTEAGRSSS.

It belongs to the dCTP deaminase family. In terms of assembly, homotrimer.

The catalysed reaction is dCTP + 2 H2O = dUMP + NH4(+) + diphosphate. Its pathway is pyrimidine metabolism; dUMP biosynthesis; dUMP from dCTP: step 1/1. Bifunctional enzyme that catalyzes both the deamination of dCTP to dUTP and the hydrolysis of dUTP to dUMP without releasing the toxic dUTP intermediate. In Leifsonia xyli subsp. xyli (strain CTCB07), this protein is dCTP deaminase, dUMP-forming.